The following is a 110-amino-acid chain: Proline-rich protein 15-like protein A (110 aa).

Disordered stretches follow at residues 29 to 51 (IAGD…TDSQ) and 65 to 110 (TKGR…KSGK). Residues 65–85 (TKGRHVKVSHSGRFKEKKRIR) are compositionally biased toward basic residues. Residues 100–110 (TTANENNKSGK) are compositionally biased toward polar residues.

This sequence belongs to the PRR15 family.

The chain is Proline-rich protein 15-like protein A (prr15la) from Danio rerio (Zebrafish).